The primary structure comprises 119 residues: Large ribosomal subunit protein bL20 (119 aa).

Belongs to the bacterial ribosomal protein bL20 family.

Its function is as follows. Binds directly to 23S ribosomal RNA and is necessary for the in vitro assembly process of the 50S ribosomal subunit. It is not involved in the protein synthesizing functions of that subunit. In Herminiimonas arsenicoxydans, this protein is Large ribosomal subunit protein bL20.